The primary structure comprises 216 residues: MSKVSVASVRSNVEQILKGSEEKKRNFTETVELQIGLKNYDPQRDKRFSGTIKLPNVPRPNMAICILGDAHDLDRAKHGGVDAMSVDDLKKLNKNKKLVKKLAKKYDAFIASEVLIKQIPRLLGPGLSKAGKFPSPVSHADDLYGKITEVKSTIKFQLKKVLCLGVAVGHVEMSEEQLIANIMLAVNFLVSLLKKGWQNIGSLVVKSTMGKPHRLY.

Serine 11 is modified (phosphoserine).

It belongs to the universal ribosomal protein uL1 family. Component of the large ribosomal subunit (LSU). Mature yeast ribosomes consist of a small (40S) and a large (60S) subunit. The 40S small subunit contains 1 molecule of ribosomal RNA (18S rRNA) and at least 33 different proteins. The large 60S subunit contains 3 rRNA molecules (25S, 5.8S and 5S rRNA) and at least 46 different proteins. uL1 forms part of the L1 stalk.

The protein resides in the cytoplasm. Functionally, component of the ribosome, a large ribonucleoprotein complex responsible for the synthesis of proteins in the cell. The small ribosomal subunit (SSU) binds messenger RNAs (mRNAs) and translates the encoded message by selecting cognate aminoacyl-transfer RNA (tRNA) molecules. The large subunit (LSU) contains the ribosomal catalytic site termed the peptidyl transferase center (PTC), which catalyzes the formation of peptide bonds, thereby polymerizing the amino acids delivered by tRNAs into a polypeptide chain. The nascent polypeptides leave the ribosome through a tunnel in the LSU and interact with protein factors that function in enzymatic processing, targeting, and the membrane insertion of nascent chains at the exit of the ribosomal tunnel. uL1 forms part of the L1 stalk, a mobile element that plays a role in evacuating the exit-site tRNA. The protein is Large ribosomal subunit protein uL1B (rpl101) of Schizosaccharomyces pombe (strain 972 / ATCC 24843) (Fission yeast).